The sequence spans 627 residues: 2-oxoacid:ferredoxin oxidoreductase 1, subunit alpha (627 aa).

The short motif at 253–257 (YPITP) is the YPITP motif element. Substrate-binding residues include T256 and R344.

Heterodimer composed of an alpha and a beta subunit.

The enzyme catalyses a 2-oxocarboxylate + 2 oxidized [2Fe-2S]-[ferredoxin] + CoA = an acyl-CoA + 2 reduced [2Fe-2S]-[ferredoxin] + CO2 + H(+). Its activity is regulated as follows. Inhibited by low concentration of 4-fluoro-7-nitrobenzofurazan (NBD-F). Its function is as follows. Catalyzes the coenzyme A-dependent oxidative decarboxylation of different 2-oxoacids such as 2-oxoglutarate, pyruvate and 2-oxobutyrate to form their CoA derivatives. This Sulfurisphaera tokodaii (strain DSM 16993 / JCM 10545 / NBRC 100140 / 7) (Sulfolobus tokodaii) protein is 2-oxoacid:ferredoxin oxidoreductase 1, subunit alpha.